Here is a 152-residue protein sequence, read N- to C-terminus: Ribosome maturation factor RimP (152 aa).

The protein belongs to the RimP family.

The protein localises to the cytoplasm. In terms of biological role, required for maturation of 30S ribosomal subunits. The protein is Ribosome maturation factor RimP of Porphyromonas gingivalis (strain ATCC BAA-308 / W83).